A 195-amino-acid polypeptide reads, in one-letter code: ATP-dependent Clp protease proteolytic subunit (195 aa).

Ser97 functions as the Nucleophile in the catalytic mechanism. Residue His122 is part of the active site.

Belongs to the peptidase S14 family. In terms of assembly, fourteen ClpP subunits assemble into 2 heptameric rings which stack back to back to give a disk-like structure with a central cavity, resembling the structure of eukaryotic proteasomes.

It localises to the cytoplasm. The enzyme catalyses Hydrolysis of proteins to small peptides in the presence of ATP and magnesium. alpha-casein is the usual test substrate. In the absence of ATP, only oligopeptides shorter than five residues are hydrolyzed (such as succinyl-Leu-Tyr-|-NHMec, and Leu-Tyr-Leu-|-Tyr-Trp, in which cleavage of the -Tyr-|-Leu- and -Tyr-|-Trp bonds also occurs).. Cleaves peptides in various proteins in a process that requires ATP hydrolysis. Has a chymotrypsin-like activity. Plays a major role in the degradation of misfolded proteins. The protein is ATP-dependent Clp protease proteolytic subunit of Lactobacillus acidophilus (strain ATCC 700396 / NCK56 / N2 / NCFM).